Reading from the N-terminus, the 406-residue chain is uncharacterized protein (406 aa).

The segment covering 136–153 (SQKNWGSEKNWNSPSQGP) has biased composition (polar residues). A disordered region spans residues 136–157 (SQKNWGSEKNWNSPSQGPASRE).

This is an uncharacterized protein from Rattus norvegicus (Rat).